A 46-amino-acid chain; its full sequence is DNA-directed RNA polymerases I, II, and III subunit rpabc4 (46 aa).

Positions 7, 10, 24, and 27 each coordinate Zn(2+). The segment at 7 to 27 adopts a C4-type zinc-finger fold; that stretch reads CGECGAEHEIKPKEPVKCKDC.

This sequence belongs to the archaeal Rpo12/eukaryotic RPC10 RNA polymerase subunit family. As to quaternary structure, component of the RNA polymerase I (Pol I), RNA polymerase II (Pol II) and RNA polymerase III (Pol III) complexes consisting of at least 13, 12 and 17 subunits, respectively.

The protein localises to the nucleus. Its function is as follows. DNA-dependent RNA polymerase catalyzes the transcription of DNA into RNA using the four ribonucleoside triphosphates as substrates. Common component of RNA polymerases I, II and III which synthesize ribosomal RNA precursors, mRNA precursors and many functional non-coding RNAs, and a small RNAs, such as 5S rRNA and tRNAs, respectively. This is DNA-directed RNA polymerases I, II, and III subunit rpabc4 (polr2k) from Dictyostelium discoideum (Social amoeba).